The following is an 809-amino-acid chain: PiggyBac transposable element-derived protein 1 (809 aa).

The region spanning 44-126 is the SCAN box domain; sequence RLRFRHFCYQ…TVLENLETGS (83 aa). Positions 170–199 are disordered; the sequence is CEPPQRPQGNPQEVSGPVPHGSAHLQEKNP. Lysine 218 participates in a covalent cross-link: Glycyl lysine isopeptide (Lys-Gly) (interchain with G-Cter in SUMO2). Residues 271–297 are disordered; it reads KQETSEEMEQSGEASGKPNRECAPQIP. Serine 360 carries the phosphoserine modification.

The protein is PiggyBac transposable element-derived protein 1 (PGBD1) of Homo sapiens (Human).